We begin with the raw amino-acid sequence, 147 residues long: Bis(5'-nucleosyl)-tetraphosphatase [asymmetrical] (147 aa).

An N-acetylalanine modification is found at A2. The region spanning 2 to 139 is the Nudix hydrolase domain; that stretch reads ALRACGLIIF…EMKAALQEGH (138 aa). A Nudix box motif is present at residues 43–64; sequence GHVEPGESDLETALRETQEEAG.

Belongs to the Nudix hydrolase family. The cofactor is a divalent metal cation.

The catalysed reaction is P(1),P(4)-bis(5'-guanosyl) tetraphosphate + H2O = GMP + GTP + 2 H(+). It carries out the reaction a 5'-end CoA-ribonucleoside in mRNA + H2O = a 5'-end phospho-adenosine-phospho-ribonucleoside in mRNA + (R)-4'-phosphopantetheine + 2 H(+). It catalyses the reaction a 5'-end FAD-phospho-ribonucleoside in mRNA + H2O = a 5'-end phospho-adenosine-phospho-ribonucleoside in mRNA + FMN + 2 H(+). In terms of biological role, catalyzes the asymmetric hydrolysis of diadenosine 5',5'''-P1,P4-tetraphosphate (Ap4A) to yield AMP and ATP. Exhibits decapping activity towards FAD-capped RNAs and dpCoA-capped RNAs in vitro. The sequence is that of Bis(5'-nucleosyl)-tetraphosphatase [asymmetrical] (NUDT2) from Bos taurus (Bovine).